A 337-amino-acid polypeptide reads, in one-letter code: Phosphate acyltransferase (337 aa).

It belongs to the PlsX family. In terms of assembly, homodimer. Probably interacts with PlsY.

The protein localises to the cytoplasm. It carries out the reaction a fatty acyl-[ACP] + phosphate = an acyl phosphate + holo-[ACP]. The protein operates within lipid metabolism; phospholipid metabolism. Its function is as follows. Catalyzes the reversible formation of acyl-phosphate (acyl-PO(4)) from acyl-[acyl-carrier-protein] (acyl-ACP). This enzyme utilizes acyl-ACP as fatty acyl donor, but not acyl-CoA. This chain is Phosphate acyltransferase, found in Listeria innocua serovar 6a (strain ATCC BAA-680 / CLIP 11262).